A 2563-amino-acid chain; its full sequence is Highly reducing polyketide synthase 2 (2563 aa).

A Ketosynthase family 3 (KS3) domain is found at 11-451; that stretch reads MSDIAIVGYS…GSNSHIVLDD (441 aa). Catalysis depends on for beta-ketoacyl synthase activity residues C182, H317, and H357. Residues 589–890 enclose the Malonyl-CoA:ACP transacylase (MAT) domain; that stretch reads FAFTGQGAQY…DTLSEMSSAS (302 aa). The segment at 970–1101 is N-terminal hotdog fold; that stretch reads GELLGVRVSD…ANISVEFQDN (132 aa). The PKS/mFAS DH domain maps to 970-1269; the sequence is GELLGVRVSD…TSAVSGGITH (300 aa). The Proton acceptor; for dehydratase activity role is filled by H1002. The segment at 1126–1269 is C-terminal hotdog fold; the sequence is TLPIDPRVFY…TSAVSGGITH (144 aa). D1186 (proton donor; for dehydratase activity) is an active-site residue. Positions 1296-1618 are methyltransferase (CMet) domain; sequence FAANAVPKDD…FSGNDLVIRD (323 aa). Residues 1858 to 2168 enclose the Enoyl reductase (ER) domain; that stretch reads GSLDSLQFVE…QEDTSERVIV (311 aa). The Ketoreductase (KR) domain maps to 2192 to 2370; that stretch reads STYLVAGGSG…ALSLDIGWMS (179 aa). Positions 2480–2561 constitute a Carrier domain; that stretch reads SDARERQQVV…GVAEVVEARS (82 aa). Residue S2521 is modified to O-(pantetheine 4'-phosphoryl)serine.

The cofactor is pantetheine 4'-phosphate.

It participates in secondary metabolite biosynthesis. Functionally, highly reducing polyketide synthase; part of the gene cluster that mediates the biosynthesis of the tetraketides fugralins such as linear fugralin A and cyclic fugralin B, volatile compounds that play a role in the asexual reproductive cycle but are not involved in pathogenicity. One of the key features of fugralins is the presence of a double methyl group, which is only rarely encountered in fungal secondary metabolites. As the fugralins cluster does not contain an independent methyltransferase, the PKS FGR1 is probably responsible for adding two methyl groups to the same carbon atom. Fugralin B is similar to fugralin A except for a cyclization between the carboxylic acid C-8 and the alcohol on C-4 resulting in a six membered lactone ring, probably catalyzed by the cyclase FGR4. The exact role of the individual cluster genes remains unknown and further work is needed to unravel the biosynthetic pathway. This is Highly reducing polyketide synthase 2 from Gibberella zeae (strain ATCC MYA-4620 / CBS 123657 / FGSC 9075 / NRRL 31084 / PH-1) (Wheat head blight fungus).